A 214-amino-acid chain; its full sequence is Tungstate uptake system ATP-binding protein TupC (214 aa).

The ABC transporter domain maps to 3 to 214 (ITVSNLKKSY…GRVGEADGFF (212 aa)). Residue 35-42 (GPNGAGKT) participates in ATP binding.

This sequence belongs to the ABC transporter superfamily. The complex is composed of two ATP-binding proteins (TupC), two transmembrane proteins (TupB) and a solute-binding protein (TupA).

It catalyses the reaction tungstate(in) + ATP + H2O = tungstate(out) + ADP + phosphate + H(+). Part of an ABC transporter complex involved in tungstate uptake. Probably responsible for energy coupling to the transport system. The protein is Tungstate uptake system ATP-binding protein TupC of Peptoclostridium acidaminophilum (Eubacterium acidaminophilum).